The chain runs to 182 residues: uncharacterized protein (182 aa).

This sequence belongs to the mimivirus L28/L54 family.

This is an uncharacterized protein from Acanthamoeba polyphaga (Amoeba).